Here is a 701-residue protein sequence, read N- to C-terminus: Protein UL29/UL28 (701 aa).

The interval 1 to 33 is disordered; sequence MSGRRKGCSAATASSSSSSPPSRLPPLPGHARR.

The protein belongs to the herpesviridae US22 family. As to quaternary structure, interacts with UL38 and host HDAC1; these interactions are necessary for the HDAC1 interaction with UL38. Interacts with host MTA2.

It localises to the virion. It is found in the host nucleus. The protein resides in the host cytoplasm. Functionally, contributes to activation of immediate-early gene expression. The protein is Protein UL29/UL28 (UL29) of Homo sapiens (Human).